Consider the following 873-residue polypeptide: Ectonucleotide pyrophosphatase/phosphodiesterase family member 3 (873 aa).

Residues 1-11 lie on the Cytoplasmic side of the membrane; the sequence is MESMLTLAMEQ. The chain crosses the membrane as a helical; Signal-anchor for type II membrane protein span at residues 12–30; sequence PVKRNTLKKYKIACIVLLA. At 31–873 the chain is on the extracellular side; that stretch reads LLVIVSLGLG…TYLPTFETTI (843 aa). 2 SMB domains span residues 51-93 and 94-138; these read QGSC…VEST and RIWM…GETS. 10 disulfide bridges follow: Cys54/Cys71, Cys58/Cys89, Cys69/Cys82, Cys75/Cys81, Cys98/Cys115, Cys103/Cys133, Cys113/Cys126, Cys119/Cys125, Cys144/Cys190, and Cys152/Cys364. Residues 78–80 carry the Cell attachment site motif; it reads RGD. The segment at 160–544 is phosphodiesterase; sequence PVILFSMDGF…HGSLNHLLKV (385 aa). Position 167 (Asp167) interacts with Zn(2+). Lys204 is an ATP binding site. Thr205 is a Zn(2+) binding site. The Nucleophile role is filled by Thr205. Asn226 provides a ligand contact to ATP. Asn236 carries N-linked (GlcNAc...) asparagine glycosylation. ATP is bound at residue Glu275. A glycan (N-linked (GlcNAc...) asparagine) is linked at Asn279. Tyr289 is an ATP binding site. Asn290 is a glycosylation site (N-linked (GlcNAc...) asparagine). Zn(2+) contacts are provided by Asp325, His329, Asp372, and His373. 6 disulfides stabilise this stretch: Cys380-Cys477, Cys428-Cys816, Cys561-Cys621, Cys573-Cys677, Cys575-Cys662, and Cys785-Cys795. Residue Asn425 is glycosylated (N-linked (GlcNAc...) asparagine). His482 serves as a coordination point for Zn(2+). N-linked (GlcNAc...) asparagine glycans are attached at residues Asn532, Asn592, Asn685, and Asn697. The nuclease stretch occupies residues 580-873; sequence NSIQLEQVNQ…TYLPTFETTI (294 aa). Ca(2+)-binding residues include Asp750, Asn752, Asp754, His756, and Asp758. N-linked (GlcNAc...) asparagine glycosylation is present at Asn787.

As to quaternary structure, monomer and homodimer. The cofactor is Zn(2+). N-glycosylated. N-glycosylation is necessary for normal transport to the cell membrane, but is not the apical targeting signal.

It is found in the cell membrane. Its subcellular location is the apical cell membrane. It localises to the secreted. The enzyme catalyses a ribonucleoside 5'-triphosphate + H2O = a ribonucleoside 5'-phosphate + diphosphate + H(+). It catalyses the reaction ATP + H2O = AMP + diphosphate + H(+). It carries out the reaction CTP + H2O = CMP + diphosphate + H(+). The catalysed reaction is GTP + H2O = GMP + diphosphate + H(+). The enzyme catalyses UTP + H2O = UMP + diphosphate + H(+). It catalyses the reaction UDP-N-acetyl-alpha-D-glucosamine + H2O = N-acetyl-alpha-D-glucosamine 1-phosphate + UMP + 2 H(+). It carries out the reaction P(1),P(3)-bis(5'-adenosyl) triphosphate + H2O = AMP + ADP + 2 H(+). The catalysed reaction is P(1),P(4)-bis(5'-adenosyl) tetraphosphate + H2O = AMP + ATP + 2 H(+). The enzyme catalyses P(1),P(5)-bis(5'-adenosyl) pentaphosphate + H2O = adenosine 5'-tetraphosphate + AMP + 2 H(+). It catalyses the reaction P(1),P(4)-bis(5'-guanosyl) tetraphosphate + H2O = GMP + GTP + 2 H(+). It carries out the reaction Hydrolytically removes 5'-nucleotides successively from the 3'-hydroxy termini of 3'-hydroxy-terminated oligonucleotides.. Functionally, hydrolase that metabolizes extracellular nucleotides, including ATP, GTP, UTP and CTP. Limits mast cells and basophils response during inflammation and during the chronic phases of allergic responses by eliminating extracellular ATP, a signaling molecule activating these cells in an autocrine manner. Metabolizes extracellular ATP in the lumen of the small intestine, and thereby prevents ATP-induced apoptosis of intestinal plasmacytoid dendritic cells. Has a broad specificity and can also hydrolyze UDP-GlcNAc into UMP and GlcNAc-1-phosphate and potentially several other intracellular nucleotide sugars, including UDP-GalNAc, CMP-NeuAc, GDP-Fuc, and UDP-GlcA. Thereby, could modulate glycan biosynthesis and protein glycosylation. Can hydrolyze extracellular dinucleoside polyphosphates, including the vasoactive adenosine polyphosphates as well. In addition, displays an alkaline phosphodiesterase activity in vitro. The protein is Ectonucleotide pyrophosphatase/phosphodiesterase family member 3 of Pongo abelii (Sumatran orangutan).